The chain runs to 46 residues: MESILMIFAKLPEAYAPFDPIVDVLPVIPVLFLLLAFVWQAAVSFR.

Residues methionine 1 to alanine 9 constitute a propeptide that is removed on maturation. The helical transmembrane segment at leucine 25–phenylalanine 45 threads the bilayer.

It belongs to the PsbK family. As to quaternary structure, PSII is composed of 1 copy each of membrane proteins PsbA, PsbB, PsbC, PsbD, PsbE, PsbF, PsbH, PsbI, PsbJ, PsbK, PsbL, PsbM, PsbT, PsbX, PsbY, PsbZ, Psb30/Ycf12, at least 3 peripheral proteins of the oxygen-evolving complex and a large number of cofactors. It forms dimeric complexes.

Its subcellular location is the plastid. It is found in the chloroplast thylakoid membrane. One of the components of the core complex of photosystem II (PSII). PSII is a light-driven water:plastoquinone oxidoreductase that uses light energy to abstract electrons from H(2)O, generating O(2) and a proton gradient subsequently used for ATP formation. It consists of a core antenna complex that captures photons, and an electron transfer chain that converts photonic excitation into a charge separation. This Stigeoclonium helveticum (Green alga) protein is Photosystem II reaction center protein K.